The primary structure comprises 822 residues: Protein smoothened (822 aa).

Residues Met-1 to Ala-28 form the signal peptide. Residues Val-29–Tyr-212 lie on the Extracellular side of the membrane. Asn-34 carries an N-linked (GlcNAc...) asparagine glycan. Intrachain disulfides connect Cys-42-Cys-157, Cys-48-Cys-112, Cys-56-Cys-105, Cys-96-Cys-132, and Cys-125-Cys-147. In terms of domain architecture, FZ spans Lys-43 to Glu-160. Asp-73 contacts cholesterol. A glycan (N-linked (GlcNAc...) asparagine) is linked at Asn-167. 3 cysteine pairs are disulfide-bonded: Cys-172–Cys-192, Cys-196–Cys-274, and Cys-293–Cys-369. Residues Ile-213–Ala-233 traverse the membrane as a helical segment. Residues Asp-234–Tyr-241 are Cytoplasmic-facing. Residues Pro-242–Ala-262 form a helical membrane-spanning segment. The Extracellular segment spans residues Gln-263–Cys-293. A helical transmembrane segment spans residues Val-294–Leu-314. Over Thr-315–Lys-335 the chain is Cytoplasmic. Residues Thr-336–Ala-356 traverse the membrane as a helical segment. Over Asn-357–Gly-381 the chain is Extracellular. Tyr-373 is a binding site for cholesterol. A helical transmembrane segment spans residues Phe-382–Val-402. Topologically, residues Met-403 to Arg-430 are cytoplasmic. A helical membrane pass occupies residues Leu-431–Tyr-451. Residues Asp-452–Ser-503 lie on the Extracellular side of the membrane. Cys-469 and Cys-486 form a disulfide bridge. An N-linked (GlcNAc...) asparagine glycan is attached at Asn-472. A helical transmembrane segment spans residues Met-504 to Trp-524. At Lys-525–Phe-822 the chain is on the cytoplasmic side. A disordered region spans residues Met-645 to Pro-687. Basic residues predominate over residues Lys-647 to Glu-658.

The protein belongs to the G-protein coupled receptor Fz/Smo family. As to quaternary structure, monomer.

The protein resides in the cell membrane. It is found in the cell projection. It localises to the cilium. Its function is as follows. G protein-coupled receptor which associates with the patched protein (ptch) to transduce Hedgehog protein signaling. Binding of sonic hedgehog (shh) to its receptor patched prevents inhibition of smoothened (smo) by patched. When active, smo binds to and sequesters protein kinase A catalytic subunit prkaca at the cell membrane, preventing prkaca-mediated phosphorylation of gli transcription factors which releases the gli proteins from prkaca-mediated inhibition and allows for transcriptional activation of Hedgehog signaling pathway target genes. Required for the development of primary and secondary motoneurons but not for the specification of midbrain dopaminergic neurons or development of the medial floor plate. Required for induction of lateral floor plate and posterior motoneurons, anterior neural plate patterning, dorsoventral forebrain patterning, dorsoventral retinal patterning, optic stalk development, and formation of the forebrain primary axonal scaffold. Required to regulate the formation of a subset of cerebellar neurons by limiting wnt1 expression which controls cerebellar expression of transcription factor olig2. Required for development of the pancreas. Required for muscle development. Required for the formation of a single continuous intestinal lumen from multiple discontinuous lumens, probably by regulating remodeling through rab11a-mediated trafficking to facilitate lumen fusion. Required for development of the adenohypophysis. Required for anteroposterior patterning of the otic vesicle. Required for development of the anterior craniofacial skeleton. Required for patterning of the caudal fin. Required during gastrulation and early somitogenesis stages to promote cardiomyocyte formation by regulating the specification of myocardial progenitors. Required for induction of arterial endothelial cell formation by repressing venous cell fate. This Danio rerio (Zebrafish) protein is Protein smoothened.